The chain runs to 100 residues: Apolipoprotein C-II (100 aa).

Residues 1–22 form the signal peptide; that stretch reads MGSRFLLALFLVLLVLGYEVQG. The lipid binding stretch occupies residues 66–74; the sequence is SVDEKLRDM. Residues 78 to 100 are lipoprotein lipase cofactor; that stretch reads SSAAVSTYAGIFTDQILTLLKGE.

It belongs to the apolipoprotein C2 family. In terms of processing, proapolipoprotein C-II is synthesized as a sialic acid containing glycoprotein which is subsequently desialylated prior to its proteolytic processing. Post-translationally, proapolipoprotein C-II, the major form found in plasma undergoes proteolytic cleavage of its N-terminal hexapeptide to generate the mature form apolipoprotein C-II, which occurs as the minor form in plasma.

Its subcellular location is the secreted. In terms of biological role, component of chylomicrons, very low-density lipoproteins (VLDL), low-density lipoproteins (LDL), and high-density lipoproteins (HDL) in plasma. Plays an important role in lipoprotein metabolism as an activator of lipoprotein lipase. In Neotoma lepida (Desert woodrat), this protein is Apolipoprotein C-II (Apoc2).